The primary structure comprises 634 residues: Sodium-dependent multivitamin transporter (634 aa).

12 consecutive transmembrane segments (helical) span residues 23–43 (FSVV…VIGL), 65–85 (MGCL…VAIL), 100–120 (FLGC…IPVF), 142–162 (ICGT…ALYA), 175–195 (LWLS…LGGL), 207–227 (LIMF…VGGL), 255–275 (FWTL…VNQA), 295–315 (AVFP…LVMF), 350–370 (LPGL…SSAF), 403–423 (FAYG…GSVL), 427–447 (LSIF…GMFF), and 455–475 (AIVG…GSIV). Asn-488 and Asn-497 each carry an N-linked (GlcNAc...) asparagine glycan. Residues 526 to 546 (LWYSAHNSTTVIAVGLIVSLL) traverse the membrane as a helical segment.

This sequence belongs to the sodium:solute symporter (SSF) (TC 2.A.21) family. As to quaternary structure, interacts with PDZD11. Expressed in the jejunum (at protein level). Expressed in lung, skeletal muscle, heart, brain, kidney, intestine, liver, and placenta.

The protein resides in the cell membrane. It is found in the apical cell membrane. It carries out the reaction biotin(out) + 2 Na(+)(out) = biotin(in) + 2 Na(+)(in). It catalyses the reaction (R)-pantothenate(out) + 2 Na(+)(out) = (R)-pantothenate(in) + 2 Na(+)(in). The enzyme catalyses (R)-lipoate(out) + 2 Na(+)(out) = (R)-lipoate(in) + 2 Na(+)(in). The catalysed reaction is iodide(out) + 2 Na(+)(out) = iodide(in) + 2 Na(+)(in). Sodium-dependent multivitamin transporter that mediates the electrogenic transport of pantothenate, biotin, lipoate and iodide. Functions as a Na(+)-coupled substrate symporter where the stoichiometry of Na(+):substrate is 2:1, creating an electrochemical Na(+) gradient used as driving force for substrate uptake. Required for biotin and pantothenate uptake in the intestine across the brush border membrane. Plays a role in the maintenance of intestinal mucosa integrity, by providing the gut mucosa with biotin. Contributes to the luminal uptake of biotin and pantothenate into the brain across the blood-brain barrier. In Rattus norvegicus (Rat), this protein is Sodium-dependent multivitamin transporter.